Consider the following 228-residue polypeptide: 2,3-bisphosphoglycerate-dependent phosphoglycerate mutase (228 aa).

Substrate contacts are provided by residues 8–15 (RHGQSAWN), 21–22 (TG), Arg-60, 87–90 (ERHY), Lys-98, 114–115 (RR), and 180–181 (GN). The Tele-phosphohistidine intermediate role is filled by His-9. Catalysis depends on Glu-87, which acts as the Proton donor/acceptor.

It belongs to the phosphoglycerate mutase family. BPG-dependent PGAM subfamily. As to quaternary structure, homodimer.

It carries out the reaction (2R)-2-phosphoglycerate = (2R)-3-phosphoglycerate. Its pathway is carbohydrate degradation; glycolysis; pyruvate from D-glyceraldehyde 3-phosphate: step 3/5. In terms of biological role, catalyzes the interconversion of 2-phosphoglycerate and 3-phosphoglycerate. The sequence is that of 2,3-bisphosphoglycerate-dependent phosphoglycerate mutase from Rhizorhabdus wittichii (strain DSM 6014 / CCUG 31198 / JCM 15750 / NBRC 105917 / EY 4224 / RW1) (Sphingomonas wittichii).